Here is a 71-residue protein sequence, read N- to C-terminus: Gas vesicle protein A (71 aa).

Positions 12–22 (LAEVIDRILDK) are alpha helix 1. Residues 26 to 34 (VDAWVRVSL) are beta-strand 1. The segment at 35 to 37 (VGI) is beta turn. Residues 38–46 (ELLAIEARI) form a beta-strand 2 region. Residues 51-70 (VETYLKYAEAVGLTQSAAVP) form an alpha helix 2 region.

This sequence belongs to the gas vesicle GvpA family. The gas vesicle shell is 2 nm thick and consists of a single layer of this protein. It forms helical ribs nearly perpendicular to the long axis of the vesicle.

Its subcellular location is the gas vesicle shell. Its function is as follows. Gas vesicles are hollow, gas filled proteinaceous nanostructures found in some microorganisms. During planktonic growth they allow positioning of the organism at a favorable depth for light or nutrient acquisition. GvpA forms the protein shell. The protein is Gas vesicle protein A of Microchaete diplosiphon (Fremyella diplosiphon).